A 432-amino-acid chain; its full sequence is Glutamate-1-semialdehyde 2,1-aminomutase 1 (432 aa).

Position 268 is an N6-(pyridoxal phosphate)lysine (K268).

The protein belongs to the class-III pyridoxal-phosphate-dependent aminotransferase family. HemL subfamily. In terms of assembly, homodimer. It depends on pyridoxal 5'-phosphate as a cofactor.

The protein localises to the cytoplasm. It catalyses the reaction (S)-4-amino-5-oxopentanoate = 5-aminolevulinate. The protein operates within porphyrin-containing compound metabolism; protoporphyrin-IX biosynthesis; 5-aminolevulinate from L-glutamyl-tRNA(Glu): step 2/2. In Bacillus mycoides (strain KBAB4) (Bacillus weihenstephanensis), this protein is Glutamate-1-semialdehyde 2,1-aminomutase 1.